Consider the following 488-residue polypeptide: uncharacterized protein (488 aa).

The protein resides in the cytoplasm. Its subcellular location is the nucleus. This is an uncharacterized protein from Schizosaccharomyces pombe (strain 972 / ATCC 24843) (Fission yeast).